The primary structure comprises 181 residues: MEQFHGTTIVSVRRKTPQGDQVAIGGDGQVTLGNIVIKGTARKVRRLYHGKVLAGFAGATADAFTLFERFEAKLEKHQGHLTRAAVELTKDWRTDRVLRKLEAMLAVADATTSLIITGNGDVLEPEDGVIAIGSGGAYAQSAAKALIDNTELTAEQIVRKSLAIAGEICIYTNMNHTVEAL.

The active site involves Thr7. Residues Gly166, Cys169, and Thr172 each contribute to the Na(+) site.

This sequence belongs to the peptidase T1B family. HslV subfamily. As to quaternary structure, a double ring-shaped homohexamer of HslV is capped on each side by a ring-shaped HslU homohexamer. The assembly of the HslU/HslV complex is dependent on binding of ATP.

Its subcellular location is the cytoplasm. The enzyme catalyses ATP-dependent cleavage of peptide bonds with broad specificity.. Its activity is regulated as follows. Allosterically activated by HslU binding. Its function is as follows. Protease subunit of a proteasome-like degradation complex believed to be a general protein degrading machinery. The protein is ATP-dependent protease subunit HslV of Variovorax paradoxus (strain S110).